The primary structure comprises 312 residues: uncharacterized protein (312 aa).

Active-site charge relay system residues include serine 200, aspartate 261, and histidine 292.

This sequence belongs to the AB hydrolase superfamily. AB hydrolase 2 family.

This is an uncharacterized protein from Acanthamoeba polyphaga mimivirus (APMV).